A 403-amino-acid polypeptide reads, in one-letter code: Phosphoglycerate kinase (403 aa).

Substrate is bound by residues 21-23 (DFN), Arg-36, 59-62 (HLGR), Arg-119, and Arg-154. ATP is bound by residues Lys-207, Gly-299, Glu-330, and 357–360 (GGDA).

Belongs to the phosphoglycerate kinase family. In terms of assembly, monomer.

Its subcellular location is the cytoplasm. The catalysed reaction is (2R)-3-phosphoglycerate + ATP = (2R)-3-phospho-glyceroyl phosphate + ADP. It participates in carbohydrate degradation; glycolysis; pyruvate from D-glyceraldehyde 3-phosphate: step 2/5. This is Phosphoglycerate kinase from Chlamydia abortus (strain DSM 27085 / S26/3) (Chlamydophila abortus).